We begin with the raw amino-acid sequence, 510 residues long: MGAIIVLVVLFATIAGYFKWIHTYWRRRGISGPEGLPFIGNYYDLADVNKPRGYLIHKWTQKFGKVFGYYEGAVPVLVVSDMDMLQELFLKKFDNFYARKSTNHIHGNLECSKSEPRINLFTSRGARWKRLRALASPGFSVKALKQVHDVMEDSAINMVDLMAKHEDGKPFNIHAYFQEFTYDVISRLAMGQPNSELFNNSGVEIVKSIFMRTHRVLPWYFTVLFPQFEHLVKRMFYNHAAVQGGDIEKLLLICKKTVESRIQEREENAKLGFENAENDFIDMFLNYYSEQVEDIEFGSTVEKKVTAEDVIGACFVFLLAGFDTTANSLAYASYLLAKHPEKMKLAQEEVDTVVGSENVSYDDMTKLKYLDAVVRESLRLYPVAWFACSRECVKPTTLGDIYIDKGVKIEADVMSLHRSKEIWGENADDFVPERWLEPSSRHTMSWIPFGAGPRQCVGMRLGLSEAKTALAHLLRRYDLVAGVETEKELNILGCTTTSPEAVTLYLKPRI.

Cysteine 456 lines the heme pocket.

The protein belongs to the cytochrome P450 family. Requires heme as cofactor.

Functionally, cytochromes P450 are a group of heme-thiolate monooxygenases. They oxidize a variety of structurally unrelated compounds, including steroids, fatty acids, and xenobiotics. May play a role in the regulation of lifespan. The chain is Putative cytochrome P450 cyp-13B1 from Caenorhabditis elegans.